Reading from the N-terminus, the 100-residue chain is Urease subunit gamma (100 aa).

This sequence belongs to the urease gamma subunit family. Heterotrimer of UreA (gamma), UreB (beta) and UreC (alpha) subunits. Three heterotrimers associate to form the active enzyme.

It localises to the cytoplasm. The enzyme catalyses urea + 2 H2O + H(+) = hydrogencarbonate + 2 NH4(+). It functions in the pathway nitrogen metabolism; urea degradation; CO(2) and NH(3) from urea (urease route): step 1/1. The chain is Urease subunit gamma from Clostridium perfringens.